A 123-amino-acid chain; its full sequence is uncharacterized protein (123 aa).

A signal peptide spans 1–24 (MLPLCLTFLSFFLSLGGSFKAVMT). 2 helical membrane passes run 39–59 (FWIFNWTVTLIPLNSLVALAI) and 101–121 (FGGILTIDLSFYWALGVALTG).

The protein resides in the membrane. This is an uncharacterized protein from Saccharomyces cerevisiae (strain ATCC 204508 / S288c) (Baker's yeast).